Reading from the N-terminus, the 459-residue chain is Phosphoglucosamine mutase (459 aa).

The active-site Phosphoserine intermediate is Ser-102. Residues Ser-102, Asp-243, Asp-245, and Asp-247 each coordinate Mg(2+). A Phosphoserine modification is found at Ser-102.

Belongs to the phosphohexose mutase family. Mg(2+) is required as a cofactor. Post-translationally, activated by phosphorylation.

It carries out the reaction alpha-D-glucosamine 1-phosphate = D-glucosamine 6-phosphate. Functionally, catalyzes the conversion of glucosamine-6-phosphate to glucosamine-1-phosphate. This is Phosphoglucosamine mutase from Bartonella quintana (strain Toulouse) (Rochalimaea quintana).